The chain runs to 484 residues: Hemogen (484 aa).

A compositionally biased stretch (basic and acidic residues) spans 1-25; the sequence is MDLGKDQSHLKHHQTPDPHQEENHS. Disordered stretches follow at residues 1 to 32 and 44 to 91; these read MDLGKDQSHLKHHQTPDPHQEENHSPEVIGTW and KAEV…PQPQ. The segment at 7–87 is necessary for nuclear localization; sequence QSHLKHHQTP…RQQNTELKVE (81 aa). The segment covering 61-79 has biased composition (basic residues); the sequence is KKRKQQRTGKGNRRGRKRQ. Phosphoserine is present on residues S123, S159, S181, S188, and S201. At T246 the chain carries Phosphothreonine. Disordered stretches follow at residues 265 to 290, 306 to 369, and 386 to 471; these read DVPKGYILDTDQNPAEPEEYNETDQG, EPKD…YSPE, and QETS…ILNE. Over residues 306-320 the composition is skewed to basic and acidic residues; that stretch reads EPKDLSTKTHQESAE. Phosphoserine occurs at positions 349 and 353. Position 360 is a phosphothreonine (T360). A phosphoserine mark is found at S363 and S367. Composition is skewed to basic and acidic residues over residues 413–428, 438–447, and 454–463; these read YKNKDVPKECFPEPHQ, PKAHQEDAKD, and EMKEKPKEEP.

As to expression, expressed in hematopoietic precursor cells, thyroid and spermatids (at protein level). Expressed in bone marrow, testis, thymus. Expressed in prostate cancer and ovarian cancer. Also expressed in thymus and thyroid tumors, non-Hodgkin lymphoma, various leukemia cell lines, peripheral blood mononuclear cells (PBMCs) and bone marrow mononuclear cells (BMMCs) of patients with leukemia.

The protein resides in the nucleus. Regulates the proliferation and differentiation of hematopoietic cells. Overexpression block the TPA-induced megakaryocytic differentiation in the K562 cell model. May also prevent cell apoptosis through the activation of the nuclear factor-kappa B (NF-kB). In Homo sapiens (Human), this protein is Hemogen (HEMGN).